We begin with the raw amino-acid sequence, 413 residues long: Arginine biosynthesis bifunctional protein ArgJ, mitochondrial (413 aa).

Substrate-binding residues include threonine 168, lysine 194, threonine 205, and glutamate 292. The active-site Nucleophile is threonine 205.

It belongs to the ArgJ family. As to quaternary structure, heterodimer of an alpha and a beta chain. In terms of processing, the alpha and beta chains are autoproteolytically processed from a single precursor protein within the mitochondrion.

Its subcellular location is the mitochondrion matrix. The catalysed reaction is N(2)-acetyl-L-ornithine + L-glutamate = N-acetyl-L-glutamate + L-ornithine. It catalyses the reaction L-glutamate + acetyl-CoA = N-acetyl-L-glutamate + CoA + H(+). It functions in the pathway amino-acid biosynthesis; L-arginine biosynthesis; L-ornithine and N-acetyl-L-glutamate from L-glutamate and N(2)-acetyl-L-ornithine (cyclic): step 1/1. It participates in amino-acid biosynthesis; L-arginine biosynthesis; N(2)-acetyl-L-ornithine from L-glutamate: step 1/4. Catalyzes two activities which are involved in the cyclic version of arginine biosynthesis: the synthesis of acetylglutamate from glutamate and acetyl-CoA, and of ornithine by transacetylation between acetylornithine and glutamate. The polypeptide is Arginine biosynthesis bifunctional protein ArgJ, mitochondrial (Clavispora lusitaniae (strain ATCC 42720) (Yeast)).